The primary structure comprises 80 residues: RNA-binding protein Hfq (80 aa).

One can recognise a Sm domain in the interval 10–70; that stretch reads DLFLNTVRKQ…ISTIMPGQPM (61 aa).

Belongs to the Hfq family. As to quaternary structure, homohexamer.

In terms of biological role, RNA chaperone that binds small regulatory RNA (sRNAs) and mRNAs to facilitate mRNA translational regulation in response to envelope stress, environmental stress and changes in metabolite concentrations. Also binds with high specificity to tRNAs. This is RNA-binding protein Hfq from Agrobacterium fabrum (strain C58 / ATCC 33970) (Agrobacterium tumefaciens (strain C58)).